The chain runs to 664 residues: E3 ubiquitin-protein ligase RNF139 (664 aa).

Residue A2 is modified to N-acetylalanine. A run of 12 helical transmembrane segments spans residues 51 to 71 (IVLQ…VLIL), 85 to 105 (AFLL…HIDF), 125 to 145 (SLWM…VTLL), 154 to 174 (LIIL…PLHI), 178 to 198 (LLFT…AVKL), 293 to 313 (GMSA…LAFI), 323 to 343 (LGFV…LSGL), 356 to 376 (MCLL…PVLM), 390 to 410 (FPVL…SYVL), 420 to 440 (LFAV…SLTV), 469 to 489 (SIIE…TMMF), and 495 to 512 (IRAF…YLQA). Residues 547-586 (CAICYHEFTTSARITPCNHYFHALCLRKWLYIQDTCPMCH) form an RING-type; atypical zinc finger. The segment at 601–664 (VSNNNGFIPP…AAEEFNDDTD (64 aa)) is disordered. Over residues 616 to 628 (EAVREAAAESDRE) the composition is skewed to basic and acidic residues. Residues 629–639 (LNEDDSTDCDD) show a composition bias toward acidic residues. S634 is subject to Phosphoserine. 2 positions are modified to phosphothreonine: T635 and T663.

Interacts with MHC class I and HM13. Interacts with VHL. Component of SCAP-SREBP complex composed of SREBF2, SCAP and RNF139; the complex hampers the interaction between SCAP and SEC24B, thereby reducing SREBF2 proteolytic processing. Interacts with SREBF2 (via C-terminal domain). Interacts with SCAP; the interaction inhibits the interaction of SCAP with SEC24B and hampering the ER to Golgi transport of the SCAP-SREBP complex. Interacts with SEC24B. Interacts with INSIG1 and INSIG2. Interacts with EIF3F and EIF3H; the interaction leads to protein translation inhibitions in a ubiquitination-dependent manner. Interacts with XBP1 isoform 1; the interaction induces ubiquitination and degradation of XBP1 isoform 1. Interacts with AUP1, AMFR and UBE2G2; interaction with AUP1 facilitates interaction of RNF139 with ubiquitin-conjugating enzyme UBE2G2 and ubiquitin ligase AMFR/gp78, leading to sterol-induced ubiquitination of HMGCR and its subsequent proteasomal degradation. In terms of processing, autoubiquitinated. Ubiquitination is induced by sterol and leads to ist degradation via the ubiquitin-proteasome pathway. In terms of tissue distribution, highly expressed in testis, placenta and adrenal gland. Moderate expression in heart, brain, liver, skeletal muscle and pancreas, and low expression in lung and kidney.

The protein resides in the endoplasmic reticulum membrane. The enzyme catalyses S-ubiquitinyl-[E2 ubiquitin-conjugating enzyme]-L-cysteine + [acceptor protein]-L-lysine = [E2 ubiquitin-conjugating enzyme]-L-cysteine + N(6)-ubiquitinyl-[acceptor protein]-L-lysine.. It functions in the pathway protein modification; protein ubiquitination. In terms of biological role, E3-ubiquitin ligase; acts as a negative regulator of cell proliferation through mechanisms involving G2/M arrest and cell death. Required for MHC class I ubiquitination in cells expressing the cytomegalovirus protein US2 before dislocation from the endoplasmic reticulum (ER). Affects SREBP processing by hindering the SREBP-SCAP complex translocation from the ER to the Golgi, thereby reducing SREBF2 target gene expression. Involved in the sterol-accelerated degradation of HMGCR. This is achieved through binding of RNF139 to INSIG1 and/or INSIG2 at the ER membrane. In addition, interaction of RNF139 with AUP1 facilitates interaction of RNF139 with ubiquitin-conjugating enzyme UBE2G2 and ubiquitin ligase AMFR, leading to ubiquitination of HMGCR. The ubiquitinated HMGCR is then released from the ER into the cytosol for subsequent destruction. Required for INSIG1 ubiquitination. May be required for EIF3 complex ubiquitination. The sequence is that of E3 ubiquitin-protein ligase RNF139 from Homo sapiens (Human).